Reading from the N-terminus, the 432-residue chain is Adenylosuccinate synthetase (432 aa).

GTP-binding positions include 13–19 (GDEGKGK) and 41–43 (GHT). Residue Asp14 is the Proton acceptor of the active site. Mg(2+)-binding residues include Asp14 and Gly41. IMP contacts are provided by residues 14–17 (DEGK), 39–42 (NAGH), Thr131, Arg145, Gln226, Thr241, and Arg305. His42 serves as the catalytic Proton donor. Residue 301-307 (SVTGRAR) coordinates substrate. Residues Arg307, 333–335 (KLD), and 416–418 (STG) each bind GTP.

The protein belongs to the adenylosuccinate synthetase family. As to quaternary structure, homodimer. Mg(2+) is required as a cofactor.

Its subcellular location is the cytoplasm. The catalysed reaction is IMP + L-aspartate + GTP = N(6)-(1,2-dicarboxyethyl)-AMP + GDP + phosphate + 2 H(+). It functions in the pathway purine metabolism; AMP biosynthesis via de novo pathway; AMP from IMP: step 1/2. Its function is as follows. Plays an important role in the de novo pathway of purine nucleotide biosynthesis. Catalyzes the first committed step in the biosynthesis of AMP from IMP. The sequence is that of Adenylosuccinate synthetase from Neisseria meningitidis serogroup B (strain ATCC BAA-335 / MC58).